The sequence spans 330 residues: Virulence plasmid integrase pGP8-D (330 aa).

The 86-residue stretch at 39-124 (FSLFEVIMHW…SYISLTRFLN (86 aa)) folds into the Core-binding (CB) domain. The Tyr recombinase domain occupies 152-327 (VKTDAMNSLQ…SREDNASKKM (176 aa)). Catalysis depends on residues R189, K214, H279, R282, and H305. Catalysis depends on Y314, which acts as the O-(3'-phospho-DNA)-tyrosine intermediate.

The protein belongs to the 'phage' integrase family.

In Chlamydia trachomatis serovar L2 (strain ATCC VR-902B / DSM 19102 / 434/Bu), this protein is Virulence plasmid integrase pGP8-D.